The primary structure comprises 777 residues: Glucocorticoid receptor (777 aa).

Residues 1–14 (MDSKESLTPGKEEN) are compositionally biased toward basic and acidic residues. The disordered stretch occupies residues 1 to 22 (MDSKESLTPGKEENPSSVLTQE). The modulating stretch occupies residues 1–420 (MDSKESLTPG…TATTGPPPKL (420 aa)). Threonine 8 is subject to Phosphothreonine. Position 23 is an omega-N-methylarginine (arginine 23). Phosphoserine is present on residues serine 45, serine 113, serine 134, and serine 141. A disordered region spans residues 130–183 (NRSTSVPENPKSSASSSVSAAPKEKEFPKTHSDVSSEQQNLKGQTGTNGGNAKL). A compositionally biased stretch (low complexity) spans 134–150 (SVPENPKSSASSSVSAA). Over residues 151–163 (PKEKEFPKTHSDV) the composition is skewed to basic and acidic residues. Residues 164-174 (SSEQQNLKGQT) are compositionally biased toward polar residues. 3 positions are modified to phosphoserine: serine 203, serine 211, and serine 226. Residue lysine 258 forms a Glycyl lysine isopeptide (Lys-Gly) (interchain with G-Cter in SUMO2) linkage. Serine 267 carries the post-translational modification Phosphoserine. Residues lysine 277 and lysine 293 each participate in a glycyl lysine isopeptide (Lys-Gly) (interchain with G-Cter in SUMO); alternate cross-link. Residues lysine 277 and lysine 293 each participate in a glycyl lysine isopeptide (Lys-Gly) (interchain with G-Cter in SUMO2); alternate cross-link. A compositionally biased stretch (low complexity) spans 394–414 (SSPSMRPDVSSPPSSSSTATT). The segment at 394–415 (SSPSMRPDVSSPPSSSSTATTG) is disordered. Serine 404 is subject to Phosphoserine. Lysine 419 is covalently cross-linked (Glycyl lysine isopeptide (Lys-Gly) (interchain with G-Cter in ubiquitin)). 2 NR C4-type zinc fingers span residues 421-441 (CLVC…CGSC) and 457-481 (CAGR…YRKC). A DNA-binding region (nuclear receptor) is located at residues 421-486 (CLVCSDEASG…RYRKCLQAGM (66 aa)). Lysine 480, lysine 492, lysine 494, and lysine 495 each carry N6-acetyllysine. Positions 485 to 777 (GMNLEARKTK…NIRKLLFHQK (293 aa)) are interaction with CLOCK. A hinge region spans residues 487–523 (NLEARKTKKKIKGIQQATTGVSQETSENPANKTIVPA). The NR LBD domain occupies 524-758 (TLPQLTPTLV…FPEMLAEIIT (235 aa)). The interval 532-697 (LVSLLEVIEP…EIRMTYIKEL (166 aa)) is interaction with CRY1. Residue lysine 703 forms a Glycyl lysine isopeptide (Lys-Gly) (interchain with G-Cter in SUMO) linkage.

The protein belongs to the nuclear hormone receptor family. NR3 subfamily. In terms of assembly, heteromultimeric cytoplasmic complex with HSP90AA1, HSPA1A/HSPA1B, and FKBP5 or another immunophilin such as PPID, STIP1, or the immunophilin homolog PPP5C. Upon ligand binding FKBP5 dissociates from the complex and FKBP4 takes its place, thereby linking the complex to dynein and mediating transport to the nucleus, where the complex dissociates. Probably forms a complex composed of chaperones HSP90 and HSP70, co-chaperones CDC37, PPP5C, TSC1 and client protein TSC2, CDK4, AKT, RAF1 and NR3C1; this complex does not contain co-chaperones STIP1/HOP and PTGES3/p23. Directly interacts with UNC45A. Binds to DNA as a homodimer, and as heterodimer with NR3C2 or the retinoid X receptor. Binds STAT5A and STAT5B homodimers and heterodimers. Interacts with NRIP1, POU2F1, POU2F2 and TRIM28. Interacts with several coactivator complexes, including the SMARCA4 complex, CREBBP/EP300, TADA2L (Ada complex) and p160 coactivators such as NCOA2 and NCOA6. Interaction with BAG1 inhibits transactivation. Interacts with HEXIM1 and TGFB1I1. Interacts with NCOA1. Interacts with NCOA3, SMARCA4, SMARCC1, SMARCD1, and SMARCE1. Interacts with CLOCK, CRY1 and CRY2 in a ligand-dependent fashion. Interacts with CIART. Interacts with RWDD3. Interacts with UBE2I/UBC9 and this interaction is enhanced in the presence of RWDD3. Interacts with GRIP1. Interacts with NR4A3 (via nuclear receptor DNA-binding domain), represses transcription activity of NR4A3 on the POMC promoter Nur response element (NurRE). Directly interacts with PNRC2 to attract and form a complex with UPF1 and DCP1A; the interaction leads to rapid mRNA degradation. Interacts with GSK3B. Interacts with FNIP1 and FNIP2. Interacts (via C-terminus) with HNRNPU (via C-terminus). Interacts with MCM3AP. Interacts (via domain NR LBD) with HSP90AA1 and HSP90AB1. In the absence of hormonal ligand, interacts with TACC1. Interacts (via NR LBD domain) with ZNF764 (via KRAB domain); the interaction regulates transcription factor activity of NR3C1 by directing its actions toward certain biologic pathways. Post-translationally, acetylation by CLOCK reduces its binding to glucocorticoid response elements and its transcriptional activity. In terms of processing, increased proteasome-mediated degradation in response to glucocorticoids. Phosphorylated in the absence of hormone; becomes hyperphosphorylated in the presence of glucocorticoid. The Ser-203, Ser-226 and Ser-404-phosphorylated forms are mainly cytoplasmic, and the Ser-211-phosphorylated form is nuclear. Phosphorylation at Ser-211 increases transcriptional activity. Phosphorylation at Ser-203, Ser-226 and Ser-404 decreases signaling capacity. Phosphorylation at Ser-404 may protect from glucocorticoid-induced apoptosis. Phosphorylation at Ser-203 and Ser-211 is not required in regulation of chromosome segregation. May be dephosphorylated by PPP5C, attenuates NR3C1 action. Post-translationally, ubiquitinated by UBR5, leading to its degradation: UBR5 specifically recognizes and binds ligand-bound NR3C1 when it is not associated with coactivators (NCOAs). In presence of NCOAs, the UBR5-degron is not accessible, preventing its ubiquitination and degradation. In terms of processing, sumoylation at Lys-277 and Lys-293 negatively regulates its transcriptional activity. Sumoylation at Lys-703 positively regulates its transcriptional activity in the presence of RWDD3. Sumoylation at Lys-277 and Lys-293 is dispensable whereas sumoylation at Lys-703 is critical for the stimulatory effect of RWDD3 on its transcriptional activity. Heat shock increases sumoylation in a RWDD3-dependent manner.

The protein resides in the cytoplasm. Its subcellular location is the nucleus. It is found in the mitochondrion. It localises to the cytoskeleton. The protein localises to the spindle. The protein resides in the microtubule organizing center. Its subcellular location is the centrosome. It is found in the chromosome. It localises to the nucleoplasm. Its function is as follows. Receptor for glucocorticoids (GC). Has a dual mode of action: as a transcription factor that binds to glucocorticoid response elements (GRE), both for nuclear and mitochondrial DNA, and as a modulator of other transcription factors. Affects inflammatory responses, cellular proliferation and differentiation in target tissues. Involved in chromatin remodeling. Plays a role in rapid mRNA degradation by binding to the 5' UTR of target mRNAs and interacting with PNRC2 in a ligand-dependent manner which recruits the RNA helicase UPF1 and the mRNA-decapping enzyme DCP1A, leading to RNA decay. Could act as a coactivator for STAT5-dependent transcription upon growth hormone (GH) stimulation and could reveal an essential role of hepatic GR in the control of body growth. Mediates glucocorticoid-induced apoptosis. Promotes accurate chromosome segregation during mitosis. May act as a tumor suppressor. May play a negative role in adipogenesis through the regulation of lipolytic and antilipogenic gene expression. This is Glucocorticoid receptor (NR3C1) from Saguinus oedipus (Cotton-top tamarin).